The sequence spans 878 residues: Serine/threonine-protein kinase N3 (878 aa).

REM-1 domains follow at residues 2–77 (EHRK…QVLL), 86–165 (SEPQ…SGSP), and 169–238 (PDLL…RLPP). Ser-164 is modified (phosphoserine). Residues 461–525 (PNTASPPKGR…TPCTKRPHMD (65 aa)) are disordered. The Protein kinase domain maps to 548-807 (FRCLAVLGRG…AEEIKVQPFF (260 aa)). ATP-binding positions include 554–562 (LGRGHFGKV) and Lys-577. Asp-673 functions as the Proton acceptor in the catalytic mechanism. Residues Thr-707, Thr-711, and Thr-849 each carry the phosphothreonine modification. In terms of domain architecture, AGC-kinase C-terminal spans 808 to 878 (RTTNWQALLA…DFVSEQFLES (71 aa)).

Belongs to the protein kinase superfamily. AGC Ser/Thr protein kinase family. PKC subfamily. Post-translationally, autophosphorylated.

The protein localises to the nucleus. It is found in the cytoplasm. It localises to the perinuclear region. It catalyses the reaction L-seryl-[protein] + ATP = O-phospho-L-seryl-[protein] + ADP + H(+). The catalysed reaction is L-threonyl-[protein] + ATP = O-phospho-L-threonyl-[protein] + ADP + H(+). With respect to regulation, two specific sites, Thr-707 (activation loop of the kinase domain) and Thr-849 (turn motif), need to be phosphorylated for its full activation. Its function is as follows. Contributes to invasiveness in malignant prostate cancer. This chain is Serine/threonine-protein kinase N3 (Pkn3), found in Mus musculus (Mouse).